The chain runs to 269 residues: Glutamate racemase (269 aa).

Residues 14-15 (DS) and 46-47 (YS) contribute to the substrate site. The active-site Proton donor/acceptor is Cys78. 79–80 (NT) contributes to the substrate binding site. Cys189 (proton donor/acceptor) is an active-site residue. 190–191 (TH) contacts substrate.

Belongs to the aspartate/glutamate racemases family.

It carries out the reaction L-glutamate = D-glutamate. It functions in the pathway cell wall biogenesis; peptidoglycan biosynthesis. Its function is as follows. Provides the (R)-glutamate required for cell wall biosynthesis. This chain is Glutamate racemase, found in Haemophilus influenzae (strain PittGG).